We begin with the raw amino-acid sequence, 334 residues long: Protein-methionine-sulfoxide reductase catalytic subunit MsrP (334 aa).

Positions 1-44 form a signal peptide, tat-type signal; it reads MKAVNPLTENDVTPESLFNARRRTVLKMLGMSAAALSLPGAARA. Residues Asn-88, 91 to 92, Cys-146, Thr-181, Asn-233, Arg-238, and 249 to 251 contribute to the Mo-molybdopterin site; these read YE and GIK.

This sequence belongs to the MsrP family. In terms of assembly, heterodimer of a catalytic subunit (MsrP) and a heme-binding subunit (MsrQ). It depends on Mo-molybdopterin as a cofactor. Predicted to be exported by the Tat system. The position of the signal peptide cleavage has not been experimentally proven.

It is found in the periplasm. The enzyme catalyses L-methionyl-[protein] + a quinone + H2O = L-methionyl-(S)-S-oxide-[protein] + a quinol. It catalyses the reaction L-methionyl-[protein] + a quinone + H2O = L-methionyl-(R)-S-oxide-[protein] + a quinol. Part of the MsrPQ system that repairs oxidized periplasmic proteins containing methionine sulfoxide residues (Met-O), using respiratory chain electrons. Thus protects these proteins from oxidative-stress damage caused by reactive species of oxygen and chlorine generated by the host defense mechanisms. MsrPQ is essential for the maintenance of envelope integrity under bleach stress, rescuing a wide series of structurally unrelated periplasmic proteins from methionine oxidation. The catalytic subunit MsrP is non-stereospecific, being able to reduce both (R-) and (S-) diastereoisomers of methionine sulfoxide. This is Protein-methionine-sulfoxide reductase catalytic subunit MsrP from Erwinia tasmaniensis (strain DSM 17950 / CFBP 7177 / CIP 109463 / NCPPB 4357 / Et1/99).